The following is a 470-amino-acid chain: Argininosuccinate lyase (470 aa).

It belongs to the lyase 1 family. Argininosuccinate lyase subfamily.

It is found in the cytoplasm. It catalyses the reaction 2-(N(omega)-L-arginino)succinate = fumarate + L-arginine. The protein operates within amino-acid biosynthesis; L-arginine biosynthesis; L-arginine from L-ornithine and carbamoyl phosphate: step 3/3. This chain is Argininosuccinate lyase, found in Leptospira borgpetersenii serovar Hardjo-bovis (strain L550).